The sequence spans 306 residues: Porphobilinogen deaminase (306 aa).

Cys234 bears the S-(dipyrrolylmethanemethyl)cysteine mark.

Belongs to the HMBS family. As to quaternary structure, monomer. Dipyrromethane is required as a cofactor.

The enzyme catalyses 4 porphobilinogen + H2O = hydroxymethylbilane + 4 NH4(+). The protein operates within porphyrin-containing compound metabolism; protoporphyrin-IX biosynthesis; coproporphyrinogen-III from 5-aminolevulinate: step 2/4. Its function is as follows. Tetrapolymerization of the monopyrrole PBG into the hydroxymethylbilane pre-uroporphyrinogen in several discrete steps. The protein is Porphobilinogen deaminase of Mycobacteroides abscessus (strain ATCC 19977 / DSM 44196 / CCUG 20993 / CIP 104536 / JCM 13569 / NCTC 13031 / TMC 1543 / L948) (Mycobacterium abscessus).